The following is a 278-amino-acid chain: Non-heme chloroperoxidase (278 aa).

The region spanning 26 to 264 is the AB hydrolase-1 domain; sequence PVVLIHGFPL…GAPHGLLWTH (239 aa). Active-site residues include S99, D229, and H258.

It belongs to the AB hydrolase superfamily. Bacterial non-heme haloperoxidase / perhydrolase family. As to quaternary structure, homodimer.

The polypeptide is Non-heme chloroperoxidase (cpo) (Kitasatospora aureofaciens (Streptomyces aureofaciens)).